A 155-amino-acid polypeptide reads, in one-letter code: Transcription antitermination protein NusB (155 aa).

It belongs to the NusB family.

Its function is as follows. Involved in transcription antitermination. Required for transcription of ribosomal RNA (rRNA) genes. Binds specifically to the boxA antiterminator sequence of the ribosomal RNA (rrn) operons. The polypeptide is Transcription antitermination protein NusB (Vibrio atlanticus (strain LGP32) (Vibrio splendidus (strain Mel32))).